The chain runs to 157 residues: Crossover junction endodeoxyribonuclease RuvC (157 aa).

Active-site residues include Asp7, Glu67, and Asp140. The Mg(2+) site is built by Asp7, Glu67, and Asp140.

Belongs to the RuvC family. As to quaternary structure, homodimer which binds Holliday junction (HJ) DNA. The HJ becomes 2-fold symmetrical on binding to RuvC with unstacked arms; it has a different conformation from HJ DNA in complex with RuvA. In the full resolvosome a probable DNA-RuvA(4)-RuvB(12)-RuvC(2) complex forms which resolves the HJ. It depends on Mg(2+) as a cofactor.

It localises to the cytoplasm. The enzyme catalyses Endonucleolytic cleavage at a junction such as a reciprocal single-stranded crossover between two homologous DNA duplexes (Holliday junction).. In terms of biological role, the RuvA-RuvB-RuvC complex processes Holliday junction (HJ) DNA during genetic recombination and DNA repair. Endonuclease that resolves HJ intermediates. Cleaves cruciform DNA by making single-stranded nicks across the HJ at symmetrical positions within the homologous arms, yielding a 5'-phosphate and a 3'-hydroxyl group; requires a central core of homology in the junction. The consensus cleavage sequence is 5'-(A/T)TT(C/G)-3'. Cleavage occurs on the 3'-side of the TT dinucleotide at the point of strand exchange. HJ branch migration catalyzed by RuvA-RuvB allows RuvC to scan DNA until it finds its consensus sequence, where it cleaves and resolves the cruciform DNA. The polypeptide is Crossover junction endodeoxyribonuclease RuvC (Rickettsia bellii (strain RML369-C)).